The following is a 198-amino-acid chain: MDTLKKAGTMLAHLDLFHSMLDLRRLLQLAAYMKERGDRAMLISAGEITLIGSESMTAPEVVTSKGETIDAATAYRVLGQLEGYEAPEYAVNREALAALNARAVAELEGSEALRAFGDTLARISAAPTDPAGPERPGTDRAERTAAERTASERATHDRASTERPARPRRSAEPEAVRTEDAPQPNAEASEAGENTPAA.

The segment at 124 to 198 is disordered; that stretch reads SAAPTDPAGP…SEAGENTPAA (75 aa). Positions 136-180 are enriched in basic and acidic residues; sequence PGTDRAERTAAERTASERATHDRASTERPARPRRSAEPEAVRTED.

Its function is as follows. Appears to contribute to D.radiodurans capacity to survive exposure to ionizing radiation. May play a role in DNA repair and genome reconstitution. This chain is DNA damage response protein D (ddrD), found in Deinococcus radiodurans (strain ATCC 13939 / DSM 20539 / JCM 16871 / CCUG 27074 / LMG 4051 / NBRC 15346 / NCIMB 9279 / VKM B-1422 / R1).